Reading from the N-terminus, the 205-residue chain is High frequency lysogenization protein HflD homolog (205 aa).

Belongs to the HflD family.

It is found in the cytoplasm. Its subcellular location is the cell inner membrane. In Shewanella baltica (strain OS155 / ATCC BAA-1091), this protein is High frequency lysogenization protein HflD homolog.